We begin with the raw amino-acid sequence, 275 residues long: Large ribosomal subunit protein uL2 (275 aa).

Residues 223–275 are disordered; sequence GVVMNPVDHPHGGGEGRGKGHHPQSPWGVPAKGYKTRRGKRASDKFIVRRRNG. Residues 230 to 240 are compositionally biased toward basic and acidic residues; the sequence is DHPHGGGEGRG.

Belongs to the universal ribosomal protein uL2 family. Part of the 50S ribosomal subunit. Forms a bridge to the 30S subunit in the 70S ribosome.

One of the primary rRNA binding proteins. Required for association of the 30S and 50S subunits to form the 70S ribosome, for tRNA binding and peptide bond formation. It has been suggested to have peptidyltransferase activity; this is somewhat controversial. Makes several contacts with the 16S rRNA in the 70S ribosome. The polypeptide is Large ribosomal subunit protein uL2 (Fervidobacterium nodosum (strain ATCC 35602 / DSM 5306 / Rt17-B1)).